The primary structure comprises 140 residues: Large ribosomal subunit protein uL13 (140 aa).

It belongs to the universal ribosomal protein uL13 family. Part of the 50S ribosomal subunit.

Functionally, this protein is one of the early assembly proteins of the 50S ribosomal subunit, although it is not seen to bind rRNA by itself. It is important during the early stages of 50S assembly. The protein is Large ribosomal subunit protein uL13 of Sulfurimonas denitrificans (strain ATCC 33889 / DSM 1251) (Thiomicrospira denitrificans (strain ATCC 33889 / DSM 1251)).